A 461-amino-acid polypeptide reads, in one-letter code: Anthocyanidin 3-O-glucoside 5-O-glucosyltransferase (461 aa).

The first 15 residues, 1–15, serve as a signal peptide directing secretion; sequence MSRAHVLLATFPAQG. The active-site Proton acceptor is the H16. H16 serves as a coordination point for an anthocyanidin. Residues Q338, H353, W356, N357, S358, E361, D377, and Q378 each contribute to the UDP-alpha-D-glucose site.

The protein belongs to the UDP-glycosyltransferase family.

It carries out the reaction an anthocyanidin 3-O-beta-D-glucoside + UDP-alpha-D-glucose = an anthocyanidin 3,5-di-O-beta-D-glucoside + UDP + 2 H(+). The protein operates within pigment biosynthesis; anthocyanin biosynthesis. In terms of biological role, catalyzes the glucosylation at the O-5 position of anthocyanidin 3-glucosides to form anthocyanidin 3,5-di-O-glucosides using UDP-glucose as sugar donor. Anthocyanidin 3,5-di-O-glucosides are molecules that are responsible for pigmentation. Also acts on anthocyanidin 3-O-(6-O-malonylglucoside). Much less active with hydroxycinnamoylglucose derivatives. No activity in the absence of the 3-O-glucoside group. This Verbena hybrida (Garden vervain) protein is Anthocyanidin 3-O-glucoside 5-O-glucosyltransferase (HGT8).